Consider the following 157-residue polypeptide: Small ribosomal subunit protein uS7 (157 aa).

Belongs to the universal ribosomal protein uS7 family. As to quaternary structure, part of the 30S ribosomal subunit. Contacts proteins S9 and S11.

Its function is as follows. One of the primary rRNA binding proteins, it binds directly to 16S rRNA where it nucleates assembly of the head domain of the 30S subunit. Is located at the subunit interface close to the decoding center, probably blocks exit of the E-site tRNA. The sequence is that of Small ribosomal subunit protein uS7 from Delftia acidovorans (strain DSM 14801 / SPH-1).